The chain runs to 279 residues: Inorganic pyrophosphatase 2 (279 aa).

The active-site Nucleophile is the Asp12. The Mg(2+) site is built by Asp12 and Asp14. Residue Asp14 is the Proton donor of the active site. The substrate site is built by Asp23 and Asp98. Asp182 provides a ligand contact to Mg(2+).

It belongs to the HAD-like hydrolase superfamily. Tetramer. Requires Mg(2+) as cofactor.

It carries out the reaction diphosphate + H2O = 2 phosphate + H(+). Functionally, catalyzes the specific cleavage of pyrophosphate. The sequence is that of Inorganic pyrophosphatase 2 from Arabidopsis thaliana (Mouse-ear cress).